Consider the following 487-residue polypeptide: V-type proton ATPase subunit B3 (487 aa).

Belongs to the ATPase alpha/beta chains family. As to quaternary structure, V-ATPase is a heteromultimeric enzyme composed of a peripheral catalytic V1 complex (components A to H) attached to an integral membrane V0 proton pore complex (components: a, c, c'', d and e).

The protein localises to the vacuole membrane. Functionally, non-catalytic subunit of the peripheral V1 complex of vacuolar ATPase. V-ATPase is responsible for acidifying a variety of intracellular compartments in eukaryotic cells. In Arabidopsis thaliana (Mouse-ear cress), this protein is V-type proton ATPase subunit B3 (VHA-B3).